The chain runs to 247 residues: DNA repair protein RecO (247 aa).

The protein belongs to the RecO family.

In terms of biological role, involved in DNA repair and RecF pathway recombination. The sequence is that of DNA repair protein RecO from Methylocella silvestris (strain DSM 15510 / CIP 108128 / LMG 27833 / NCIMB 13906 / BL2).